Consider the following 494-residue polypeptide: Prenylcysteine oxidase 1-like (494 aa).

A signal peptide spans 1–22; it reads MARAAPLLAALTALLAAAAAGG. Asn342 is a glycosylation site (N-linked (GlcNAc...) asparagine).

This sequence belongs to the prenylcysteine oxidase family. It depends on FAD as a cofactor.

Its subcellular location is the secreted. In terms of biological role, likely to have oxidoreductase activity. Required in the mevalonate pathway to regulate prenylation and enhances the bactericidal activity of neutrophils. This is Prenylcysteine oxidase 1-like (PCYOX1L) from Homo sapiens (Human).